The sequence spans 100 residues: Large ribosomal subunit protein uL23 (100 aa).

This sequence belongs to the universal ribosomal protein uL23 family. Part of the 50S ribosomal subunit. Contacts protein L29, and trigger factor when it is bound to the ribosome.

One of the early assembly proteins it binds 23S rRNA. One of the proteins that surrounds the polypeptide exit tunnel on the outside of the ribosome. Forms the main docking site for trigger factor binding to the ribosome. The polypeptide is Large ribosomal subunit protein uL23 (Pseudoalteromonas translucida (strain TAC 125)).